We begin with the raw amino-acid sequence, 328 residues long: Reticulocalbin-3 (328 aa).

A signal peptide spans 1–20 (MMWRWSFLLLLLLLRHWALG). Residues 24–48 (PDAGPHGQDRVHHGTPLSEAPHDDA) are disordered. 6 EF-hand domains span residues 77 to 112 (QARLGRIVDRMDLAGDSDGWVSLAELRAWIAHTQQR), 113 to 148 (HIRDSVSAAWHTYDTDRDGRVGWEELRNATYGHYEP), 163 to 198 (KMLARDERRFRVADQDGDSMATREELTAFLHPEEFP), 200 to 235 (MRDIVVAETLEDLDKNKDGYVQVEEYIADLYSEEPG), 241 to 276 (WVQTERQQFREFRDLNKDGRLDGSEVGYWVLPPSQD), and 277 to 312 (QPLVEANHLLHESDTDKDGRLSKAEILSNWNMFVGS). The Ca(2+) site is built by D92, D94, W96, E101, D126, D128, D130, R132, and E137. A glycan (N-linked (GlcNAc...) asparagine) is linked at N140. Residues D176, D178, D180, M182, E187, D213, N215, D217, Y219, E224, D254, N256, D258, R260, E265, D290, D292, D294, R296, and E301 each coordinate Ca(2+). Residues 325–328 (HDEL) carry the Prevents secretion from ER motif.

The protein belongs to the CREC family. Interacts with PCSK6 (immature form including the propeptide); probably involved in the maturation and the secretion of PCSK6. Post-translationally, degraded by PCSK6 and other endoproteases including FURIN and PCSK5. N-glycosylated. Highly expressed in lung and heart. Also detected in liver, spleen, kidney, skeletal muscle, intestine, stomach, and brain.

It localises to the endoplasmic reticulum lumen. Probable molecular chaperone assisting protein biosynthesis and transport in the endoplasmic reticulum. Required for the proper biosynthesis and transport of pulmonary surfactant-associated protein A/SP-A, pulmonary surfactant-associated protein D/SP-D and the lipid transporter ABCA3. By regulating both the proper expression and the degradation through the endoplasmic reticulum-associated protein degradation pathway of these proteins plays a crucial role in pulmonary surfactant homeostasis. Has an anti-fibrotic activity by negatively regulating the secretion of type I and type III collagens. This calcium-binding protein also transiently associates with immature PCSK6 and regulates its secretion. This chain is Reticulocalbin-3, found in Mus musculus (Mouse).